Reading from the N-terminus, the 1155-residue chain is DNA-directed RNA polymerase subunit beta (1155 aa).

The protein belongs to the RNA polymerase beta chain family. In terms of assembly, the RNAP catalytic core consists of 2 alpha, 1 beta, 1 beta' and 1 omega subunit. When a sigma factor is associated with the core the holoenzyme is formed, which can initiate transcription.

The catalysed reaction is RNA(n) + a ribonucleoside 5'-triphosphate = RNA(n+1) + diphosphate. In terms of biological role, DNA-dependent RNA polymerase catalyzes the transcription of DNA into RNA using the four ribonucleoside triphosphates as substrates. The protein is DNA-directed RNA polymerase subunit beta of Borreliella burgdorferi (strain ZS7) (Borrelia burgdorferi).